We begin with the raw amino-acid sequence, 520 residues long: 3-phosphoshikimate 1-carboxyvinyltransferase, chloroplastic (520 aa).

The N-terminal 76 residues, 1–76 (MAQISSMAQG…RISASVATAE (76 aa)), are a transit peptide targeting the chloroplast. Positions 99, 100, and 104 each coordinate 3-phosphoshikimate. Lys-99 serves as a coordination point for phosphoenolpyruvate. Gly-177 and Arg-207 together coordinate phosphoenolpyruvate. Positions 254, 255, 256, 282, 407, and 434 each coordinate 3-phosphoshikimate. Residue Gln-256 coordinates phosphoenolpyruvate. The active-site Proton acceptor is the Asp-407. Residues Arg-438, Arg-480, and Lys-505 each contribute to the phosphoenolpyruvate site.

This sequence belongs to the EPSP synthase family.

Its subcellular location is the plastid. It localises to the chloroplast. The catalysed reaction is 3-phosphoshikimate + phosphoenolpyruvate = 5-O-(1-carboxyvinyl)-3-phosphoshikimate + phosphate. It functions in the pathway metabolic intermediate biosynthesis; chorismate biosynthesis; chorismate from D-erythrose 4-phosphate and phosphoenolpyruvate: step 6/7. In terms of biological role, catalyzes the transfer of the enolpyruvyl moiety of phosphoenolpyruvate (PEP) to the 5-hydroxyl of shikimate-3-phosphate (S3P) to produce enolpyruvyl shikimate-3-phosphate and inorganic phosphate. The sequence is that of 3-phosphoshikimate 1-carboxyvinyltransferase, chloroplastic from Solanum lycopersicum (Tomato).